Reading from the N-terminus, the 503-residue chain is Secreted RxLR effector protein RXLR-C08 (503 aa).

The signal sequence occupies residues 1–22 (MRLCGVASAFLSTLILIAHIDA). Asparagine 27, asparagine 35, and asparagine 45 each carry an N-linked (GlcNAc...) asparagine glycan. A dEER motif is present at residues 57–60 (DEER). Residues asparagine 108, asparagine 197, and asparagine 374 are each glycosylated (N-linked (GlcNAc...) asparagine).

It belongs to the RxLR effector family.

It localises to the secreted. It is found in the host Golgi apparatus. In terms of biological role, secreted effector that suppresses pattern-triggered immunity (PTI) in plant host. This Plasmopara halstedii (Downy mildew of sunflower) protein is Secreted RxLR effector protein RXLR-C08.